Reading from the N-terminus, the 1211-residue chain is Sterol 3-beta-glucosyltransferase (1211 aa).

Basic and acidic residues predominate over residues 1–10 (MSQLRPRDSS). Residues 1–61 (MSQLRPRDSS…DETEAEDDID (61 aa)) form a disordered region. Residues 196 to 235 (EKLKTTFDLSDDDEFVNDYPCWLLHEVFLQGHIYITSRYL) form the GRAM 1 domain. A PH domain is found at 248–347 (VTMSGALSIR…WVTDLRKHIF (100 aa)). Disordered regions lie at residues 422-452 (LTDS…KLSR) and 500-531 (VVPN…PSNW). Acidic residues predominate over residues 423–432 (TDSDSSESDS). A compositionally biased stretch (basic and acidic residues) spans 507-525 (SELKQDHAGDAPKDSEEPS). In terms of domain architecture, GRAM 2 spans 586–652 (SRFRKHFSLP…SDIENVYNLK (67 aa)). UDP-alpha-D-glucose-binding residues include S770, R771, D773, N1046, N1072, V1073, H1075, H1088, S1091, G1092, T1093, D1112, and Q1113.

Belongs to the glycosyltransferase 28 family.

It localises to the cytoplasm. The protein resides in the preautophagosomal structure membrane. It carries out the reaction a sterol + UDP-alpha-D-glucose = a sterol 3-beta-D-glucoside + UDP + H(+). The enzyme catalyses ergosterol + UDP-alpha-D-glucose = ergosteryl 3-beta-D-glucoside + UDP + H(+). Sterol glycosyltransferase responsible for the glycosylation of ergosterol to form ergosterol-glucoside. Shows also activity in vitro on other sterols such as cholesterol, beta-sitosterol, stigmasterol and tomatidine. Probable sterol 3-beta-glucosyltransferase that mediates autophagic degradation of peroxisomes (pexophagy). The protein is Sterol 3-beta-glucosyltransferase of Komagataella phaffii (strain GS115 / ATCC 20864) (Yeast).